The sequence spans 556 residues: Formate--tetrahydrofolate ligase (556 aa).

Position 65-72 (65-72 (TPAGEGKT)) interacts with ATP.

The protein belongs to the formate--tetrahydrofolate ligase family.

It catalyses the reaction (6S)-5,6,7,8-tetrahydrofolate + formate + ATP = (6R)-10-formyltetrahydrofolate + ADP + phosphate. Its pathway is one-carbon metabolism; tetrahydrofolate interconversion. This chain is Formate--tetrahydrofolate ligase, found in Symbiobacterium thermophilum (strain DSM 24528 / JCM 14929 / IAM 14863 / T).